We begin with the raw amino-acid sequence, 383 residues long: Delta(12) fatty acid desaturase FAD2 (383 aa).

Positions 1–29 (MGAGGRMQDPTNGGNKTEPEPIQRVPHEK) are disordered. Positions 17-29 (TEPEPIQRVPHEK) are enriched in basic and acidic residues. The next 2 helical transmembrane spans lie at 50 to 70 (VIRS…LYYI) and 85 to 105 (VAWP…WVIA). Residues 106–110 (HECGH) carry the Histidine box-1 motif. A helical transmembrane segment spans residues 118–138 (WLDDTVGLVLHSFLLVPYFSW). Positions 142 to 146 (HRRHH) match the Histidine box-2 motif. Helical transmembrane passes span 180–200 (ILTL…FNVS), 226–246 (IFIS…LAMT), and 252–272 (VLTM…LITF). The Histidine box-3 motif lies at 316 to 320 (HVAHH).

It belongs to the fatty acid desaturase type 1 family. Expressed in leaves, flower buds and developing seeds.

The protein localises to the membrane. The protein operates within lipid metabolism; polyunsaturated fatty acid biosynthesis. Its function is as follows. Catalyzes the desaturation of oleic acid to linoleic acid. Introduces a double bond at position 12 of 16:1(9Z) and 18:1(9Z). The polypeptide is Delta(12) fatty acid desaturase FAD2 (Calendula officinalis (Pot marigold)).